The following is a 93-amino-acid chain: HIG1 domain family member 1A, mitochondrial (93 aa).

The 93-residue stretch at 1-93 (MSTDTGVSLP…YREFWAKPKP (93 aa)) folds into the HIG1 domain. Serine 2 carries the N-acetylserine modification. Serine 8 carries the post-translational modification Phosphoserine. The next 2 helical transmembrane spans lie at 26 to 46 (EAPF…YGLY) and 60 to 80 (LIHM…VGMG).

Associates with cytochrome c oxidase (COX, complex IV); proposed complex component. Also associates with respiratory chain supercomplexes.

It localises to the mitochondrion membrane. It is found in the mitochondrion inner membrane. In terms of biological role, proposed subunit of cytochrome c oxidase (COX, complex IV), which is the terminal component of the mitochondrial respiratory chain that catalyzes the reduction of oxygen to water. May play a role in the assembly of respiratory supercomplexes. The protein is HIG1 domain family member 1A, mitochondrial (HIGD1A) of Homo sapiens (Human).